The primary structure comprises 409 residues: Pentatricopeptide repeat-containing protein At1g01970 (409 aa).

PPR repeat units follow at residues 164–198 (NARD…GFLI), 199–233 (DQVT…GEPL), 234–268 (DYRS…EICA), 269–303 (GREV…GITP), 304–338 (DVKL…GIKA), and 339–373 (TDKC…SIML).

It belongs to the PPR family. P subfamily.

The sequence is that of Pentatricopeptide repeat-containing protein At1g01970 from Arabidopsis thaliana (Mouse-ear cress).